A 750-amino-acid chain; its full sequence is NAD(P)H-quinone oxidoreductase subunit 5, chloroplastic (750 aa).

A run of 16 helical transmembrane segments spans residues 9–29 (WIIPFLPLPVPMLIGVGLLLF), 40–60 (WAFTSILLLSIVMIFATNLSI), 89–109 (IDPLTSIMSMLITTVGIMVLI), 125–145 (FAYMSFFSTSMFGLVTSSNLI), 147–167 (IYIFWELVGMCSYLLIGFWFT), 185–205 (GDFGLLLGILGFYWITGSFEF), 230–250 (AALLFAGAVAKSAQFPLHIWL), 258–278 (TPISALIHAATMVAAGIFLVA), 283–303 (LFIVIPYILNIISLIGLITVL), 327–347 (LGYMILALGIGSYRSALFHLI), 354–374 (ALLFLGSGSVIHSMETIVGYS), 396–416 (TSFLLGTLSLSGIPPLACFWS), 425–445 (WLYSPIFAIIAWATAGLTAFY), 548–568 (LFPLLVLVLFTLFVGSIGIPF), 607–627 (IFSVSIAYFGIFLASFLYKPI), and 724–744 (LFFYFCCVSIFLVIYYKFYLF).

Belongs to the complex I subunit 5 family. NDH is composed of at least 16 different subunits, 5 of which are encoded in the nucleus.

It is found in the plastid. The protein resides in the chloroplast thylakoid membrane. The enzyme catalyses a plastoquinone + NADH + (n+1) H(+)(in) = a plastoquinol + NAD(+) + n H(+)(out). It catalyses the reaction a plastoquinone + NADPH + (n+1) H(+)(in) = a plastoquinol + NADP(+) + n H(+)(out). Its function is as follows. NDH shuttles electrons from NAD(P)H:plastoquinone, via FMN and iron-sulfur (Fe-S) centers, to quinones in the photosynthetic chain and possibly in a chloroplast respiratory chain. The immediate electron acceptor for the enzyme in this species is believed to be plastoquinone. Couples the redox reaction to proton translocation, and thus conserves the redox energy in a proton gradient. The chain is NAD(P)H-quinone oxidoreductase subunit 5, chloroplastic (ndhF) from Tecoma stans (Yellow bells).